The chain runs to 39 residues: Cytochrome b559 subunit beta (39 aa).

Residues 14–30 (WLTVHGLAVPTVSFLGS) form a helical membrane-spanning segment. His-18 contributes to the heme binding site.

It belongs to the PsbE/PsbF family. In terms of assembly, heterodimer of an alpha subunit and a beta subunit. PSII is composed of 1 copy each of membrane proteins PsbA, PsbB, PsbC, PsbD, PsbE, PsbF, PsbH, PsbI, PsbJ, PsbK, PsbL, PsbM, PsbT, PsbX, PsbY, PsbZ, Psb30/Ycf12, at least 3 peripheral proteins of the oxygen-evolving complex and a large number of cofactors. It forms dimeric complexes. It depends on heme b as a cofactor.

It localises to the plastid. The protein resides in the chloroplast thylakoid membrane. Functionally, this b-type cytochrome is tightly associated with the reaction center of photosystem II (PSII). PSII is a light-driven water:plastoquinone oxidoreductase that uses light energy to abstract electrons from H(2)O, generating O(2) and a proton gradient subsequently used for ATP formation. It consists of a core antenna complex that captures photons, and an electron transfer chain that converts photonic excitation into a charge separation. The chain is Cytochrome b559 subunit beta from Lactuca sativa (Garden lettuce).